The following is a 128-amino-acid chain: MVLPASMRLRGHRCFSRLHRSQRRHHGKWMVLRQIKRDRTLLRSELRSQHDTTCRCALVISNKVSKRAVRRNRLRRLLHNHLRQRLEQRTDLAGTWLLFSLRPDAAEAEPAQLLEECDSLLKIAGLER.

The protein belongs to the RnpA family. Consists of a catalytic RNA component (M1 or rnpB) and a protein subunit.

It carries out the reaction Endonucleolytic cleavage of RNA, removing 5'-extranucleotides from tRNA precursor.. Its function is as follows. RNaseP catalyzes the removal of the 5'-leader sequence from pre-tRNA to produce the mature 5'-terminus. It can also cleave other RNA substrates such as 4.5S RNA. The protein component plays an auxiliary but essential role in vivo by binding to the 5'-leader sequence and broadening the substrate specificity of the ribozyme. The polypeptide is Ribonuclease P protein component (Synechococcus sp. (strain CC9902)).